The chain runs to 67 residues: Large ribosomal subunit protein uL29 (67 aa).

Belongs to the universal ribosomal protein uL29 family.

This chain is Large ribosomal subunit protein uL29, found in Pelotomaculum thermopropionicum (strain DSM 13744 / JCM 10971 / SI).